The sequence spans 321 residues: Glutaminase (321 aa).

Residues S69, N120, E165, N172, Y196, Y248, and V266 each coordinate substrate.

The protein belongs to the glutaminase family. As to quaternary structure, homotetramer.

It catalyses the reaction L-glutamine + H2O = L-glutamate + NH4(+). The protein is Glutaminase of Parabacteroides distasonis (strain ATCC 8503 / DSM 20701 / CIP 104284 / JCM 5825 / NCTC 11152).